The sequence spans 686 residues: MENIVITNTSGGGGGGVPSSSTDPPNNTTTTTATASAIDLNMSLSPFLSSPSLSSPSIQSAKKKTIEDFIIGKVLGEGSYGAVVLGTEKETQQQYAIKILEKKQIIKENKIKYVQIEKEIFCKSNHPNIVKLFFTFRSEQCLYYVLELCSQGDLLHQIKKVGSFDYRSCQYYVAEIISGLEHLHSLGIVHRDLKPENILMSSDLHVKITDFGTGKILPPPQSSQQQQQQQQQQQQLPTNSSGNLSSLLNNVNNLSVSTDLTQQQQNRTSSVDSASTTDSMISPNLQPTTTTTNNNNNNNNNNNNNNNNTAAGSNTNTNTNTNINTNINANINNIKTTEIPKLTRNNSFVGTAEYVSPELISNKETSTDSDLWALGCIIYQMASGRVPFRGKTEFLTFQKVSNRELVYPINMNPVIKDLVEKLLVIKPTDRLGSSSTPGGFDNLKAHPFFQDFNWSSLSNMSHPPPPIQPPQEKIIFDGDELFSPSLDCTTPRNNNVDENHQQNSCNNNNNNNNNINNINNNNNSSSNNISNSNSNSNSSNNLNISNGNLSTPRSSSSSSSQQPTQRSGSSGGSRDGGSSSNNISKWLNNGENVIYQGLVWKRKGFSIKKRQLILTDTPRLIYIDPKKMELKGEIPWSDSIKPKLKSNNNFVIKTPKRKYLLEDVAHNPQKWVDSIKSVILSSGSSN.

Positions 1-31 are disordered; the sequence is MENIVITNTSGGGGGGVPSSSTDPPNNTTTT. Residues 18–31 show a composition bias toward low complexity; that stretch reads PSSSTDPPNNTTTT. Residues 69-449 form the Protein kinase domain; that stretch reads FIIGKVLGEG…FDNLKAHPFF (381 aa). ATP contacts are provided by residues 79–81 and K98; that span reads SYG. Positions 100–144 are PIF-pocket; it reads LEKKQIIKENKIKYVQIEKEIFCKSNHPNIVKLFFTFRSEQCLYY. ATP is bound by residues 147–149 and D153; that span reads ELC. D192 functions as the Proton acceptor in the catalytic mechanism. Residues E196 and D210 each coordinate ATP. Disordered regions lie at residues 211-321 and 481-584; these read FGTG…NTNT and LFSP…NNIS. The segment covering 222 to 257 has biased composition (low complexity); the sequence is SSQQQQQQQQQQQQLPTNSSGNLSSLLNNVNNLSVS. The segment covering 258 to 267 has biased composition (polar residues); it reads TDLTQQQQNR. Low complexity-rich tracts occupy residues 268–279, 288–321, and 503–568; these read TSSVDSASTTDS, TTTTTNNNNNNNNNNNNNNNNTAAGSNTNTNTNT, and NSCN…QRSG. The PH domain maps to 593–682; sequence VIYQGLVWKR…DSIKSVILSS (90 aa).

This sequence belongs to the protein kinase superfamily. AGC Ser/Thr protein kinase family. PDPK1 subfamily.

It catalyses the reaction L-seryl-[protein] + ATP = O-phospho-L-seryl-[protein] + ADP + H(+). It carries out the reaction L-threonyl-[protein] + ATP = O-phospho-L-threonyl-[protein] + ADP + H(+). This is Probable serine/threonine-protein kinase pdkA (pdkA) from Dictyostelium discoideum (Social amoeba).